Reading from the N-terminus, the 168-residue chain is mRNA stability protein IGO1 (168 aa).

Positions 1–13 are enriched in low complexity; sequence MSNENLSPNSSNP. The disordered stretch occupies residues 1-31; that stretch reads MSNENLSPNSSNPDLTKLNNGESGTIDTSKF. Over residues 17 to 31 the composition is skewed to polar residues; the sequence is KLNNGESGTIDTSKF. Ser32 and Ser64 each carry phosphoserine. A disordered region spans residues 125-168; it reads KEGSISSGPPSSNNGTIGGGSTSSTPVGNHSSSSSSLYTESPIR. Low complexity-rich tracts occupy residues 127 to 139 and 146 to 168; these read GSISSGPPSSNNG and TSSTPVGNHSSSSSSLYTESPIR.

Belongs to the endosulfine family. In terms of assembly, interacts with RIM15, DHH1, PBP1, PBP4 and LSM12. Phosphorylated at Ser-64 by RIM15.

In terms of biological role, required for TORC1 to properly control gene expression and chronological life span. Plays an essential role in initiation of the G0 program by preventing the degradation of specific nutrient-regulated mRNAs via the 5'-3' mRNA decay pathway. The sequence is that of mRNA stability protein IGO1 (IGO1) from Saccharomyces cerevisiae (strain ATCC 204508 / S288c) (Baker's yeast).